The chain runs to 1135 residues: Receptor-type guanylate cyclase gcy-4 (1135 aa).

A signal peptide spans 1-20 (MTQLLRFLLILSIFCDFSHS). Over 21–483 (QRPTIRVGIA…CPIPFFDQYR (463 aa)) the chain is Extracellular. Residues N37, N193, N209, N251, N349, N375, N431, N436, and N447 are each glycosylated (N-linked (GlcNAc...) asparagine). The helical transmembrane segment at 484–504 (LLIFVFVIVAGLLILAIFTCL) threads the bilayer. Residues 505 to 1135 (TSMVRNQRAE…VMRREMMRVS (631 aa)) are Cytoplasmic-facing. The tract at residues 535–560 (KGRRLSTDSENSTVTKSSKGSSSKNF) is disordered. Residues 545-837 (NSTVTKSSKG…KDNLMDHVFS (293 aa)) enclose the Protein kinase domain. Residues 546 to 560 (STVTKSSKGSSSKNF) show a composition bias toward low complexity. The Guanylate cyclase domain maps to 895 to 1025 (TVFFSDLVKF…DTVNTASRME (131 aa)).

The protein belongs to the adenylyl cyclase class-4/guanylyl cyclase family. As to expression, expressed bilaterally in ASE neurons.

It localises to the cell membrane. It carries out the reaction GTP = 3',5'-cyclic GMP + diphosphate. Its function is as follows. Guanylate cyclase involved in the production of the second messenger cGMP. Regulates chemotaxis responses toward salt ions in ASE sensory neurons. This is Receptor-type guanylate cyclase gcy-4 from Caenorhabditis briggsae.